A 124-amino-acid polypeptide reads, in one-letter code: Large ribosomal subunit protein uL18 (124 aa).

Belongs to the universal ribosomal protein uL18 family. Part of the 50S ribosomal subunit; part of the 5S rRNA/L5/L18/L25 subcomplex. Contacts the 5S and 23S rRNAs.

Its function is as follows. This is one of the proteins that bind and probably mediate the attachment of the 5S RNA into the large ribosomal subunit, where it forms part of the central protuberance. The protein is Large ribosomal subunit protein uL18 of Aquifex aeolicus (strain VF5).